A 1483-amino-acid polypeptide reads, in one-letter code: MSNTPYNSSVPSIASMTQSSVSRSPNMHTATTPGANTSSNSPPLHMSSDSSKIKRKRNRIPLSCTICRKRKVKCDKLRPHCQQCTKTGVAHLCHYMEQTWAEEAEKELLKDNELKKLRERVKSLEKTLSKVHSSPSSNSLKSYNTPESSNLFMGSDEHTTLVNANTGSASSASHMHQQQQQQQQQEQQQDFSRSANANANSSSLSISNKYDNDELDLTKDFDLLHIKSNGTIHLGATHWLSIMKGDPYLKLLWGHIFAMREKLNEWYYQKNSYSKLKSSKCPINHAQAPPSAAAAATRKCPVDHSAFSSGMVAPKEETPLPRKCPVDHTMFSSGMIPPREDTSSQKRCPVDHTMYSAGMMPPKDETPSPFSTKAMIDHNKHTMNPPQSKCPVDHRNYMKDYPSDMANSSSNPASRCPIDHSSMKNTAALPASTHNTIPHHQPQSGSHARSHPAQNRKHDSYMTESEVLATLCEMLPPKRVIALFIEKFFKHLYPAIPILDEQNFKNHVNQMLSLSSMNPTVNNFGMSMPSSSTLENQPITQINLPKLSDSCNLGILIIILRLTWLSIPSNSCEVDLGEESGSFLVPNESSNMSASALTSMAKEESLLLKHETPVEALELCQKYLIKFDELSSISNNNVNLTTVQFAIFYNFYMKSASNDLTTLTNTNNTGMANPGHDSESHQILLSNITQMAFSCGLHRDPDNFPQLNATIPATSQDVSNNGSKKANPSTNPTLNNNMSAATTNSSSRSGSADSRSGSNPVNKKENQVSIERFKHTWRKIWYYIVSMDVNQSLSLGSPRLLRNLRDFSDTKLPSASRIDYVRDIKELIIVKNFTLFFQIDLCIIAVLNHILNVSLARSVRKFELDSLINLLKNLTYGTENVNDVVSSLINKGLLPTSEGGSVDSNNDEIYGLPKLPDILNHGQHNQNLYADGRNTSSSDIDKKLDLPHESTTRALFFSKHMTIRMLLYLLNYILFTHYEPMGSEDPGTNILAKEYAQEALNFAMDGYRNCMIFFNNIRNTNSLFDYMNVILSYPCLDIGHRSLQFIVCLILRAKCGPLTGMRESSIITNGTSSGFNSSVEDEDVKVKQESSDEMKKDDFMKDVNLDSGDSLAEILMSRMLLFQKLTKQLSKKYNYAIRMNKSTGFFVSLLDTPSKKSDSKSGGSSFMLGNWKHPKVSNMSGFLAGDKDQLQKCPVYQDALGFVSPTGANEGSAPMQGMSLQGSTARMGGTQLPPIRSYKPITYTSSNLRRMNETGEAEAKRRRFNDGYIDNNSNNDIPRGISPKPSNGLSSVQPLLSSFSMNQLNGGTIPTVPSLTNITSQMGALPSLDRITTNQINLPDPSRDEAFDNSIKQMTPMTSAFMNANTTIPSSTLNGNMNMNGAGTANTDTSVNGSALSTLTSPQGSDLASNSATQYKPDLEDFLMQNSNFNGLMINPSSLVEVVGGYNDPNNLGRNDAVDFLPVDNVEIDGLVDFYRADFPIWE.

Residues 1-50 (MSNTPYNSSVPSIASMTQSSVSRSPNMHTATTPGANTSSNSPPLHMSSDS) are compositionally biased toward polar residues. The tract at residues 1–56 (MSNTPYNSSVPSIASMTQSSVSRSPNMHTATTPGANTSSNSPPLHMSSDSSKIKRK) is disordered. 6 residues coordinate Zn(2+): C64, C67, C74, C81, C84, and C93. Residues 64–93 (CTICRKRKVKCDKLRPHCQQCTKTGVAHLC) constitute a DNA-binding region (zn(2)-C6 fungal-type). A coiled-coil region spans residues 105–134 (EKELLKDNELKKLRERVKSLEKTLSKVHSS). The disordered stretch occupies residues 126–208 (KTLSKVHSSP…ANSSSLSISN (83 aa)). Low complexity predominate over residues 130–142 (KVHSSPSSNSLKS). Composition is skewed to polar residues over residues 143–152 (YNTPESSNLF) and 160–176 (TLVN…SHMH). Residues 177 to 208 (QQQQQQQQQEQQQDFSRSANANANSSSLSISN) show a composition bias toward low complexity. Residues 244–444 (KGDPYLKLLW…NTIPHHQPQS (201 aa)) are heme-responsive; required for HMC formation. HRM repeat units lie at residues 280-285 (KCPINH), 299-304 (KCPVDH), 323-328 (KCPVDH), 347-352 (RCPVDH), 389-394 (KCPVDH), and 415-420 (RCPIDH). Composition is skewed to polar residues over residues 432–447 (STHN…SGSH) and 706–734 (QLNA…NPTL). Disordered stretches follow at residues 432–458 (STHN…NRKH) and 706–767 (QLNA…KENQ). Over residues 735–759 (NNNMSAATTNSSSRSGSADSRSGSN) the composition is skewed to low complexity. The HRM 7 repeat unit spans residues 1192-1197 (KCPVYQ).

As to quaternary structure, binds DNA as a homodimer. Interacts with SRO9 and YDJ1. In the absence of heme, binds to at least four cellular proteins, including YDJ1 and SRO9, forming a high-molecular-weight complex (HMC) which results in repression of its activity and dictates its DNA-binding specificity.

It localises to the nucleus. Functionally, regulation of oxygen dependent gene expression. It modulates the expression of Iso-1 (CYP1) and Iso-2 (CYP3) cytochrome c. In response to heme, promotes transcription of genes encoding functions required for respiration, controlling oxidative damage and repression of anaerobic genes. Binds to the sequence 5'-CGGNNNTNNCGG-3'. In Saccharomyces cerevisiae (strain Lalvin EC1118 / Prise de mousse) (Baker's yeast), this protein is Heme-responsive zinc finger transcription factor HAP1 (HAP1).